The sequence spans 478 residues: Protein nucleotidyltransferase YdiU (478 aa).

Residues Gly-84, Gly-86, Arg-87, Lys-107, Asp-119, Gly-120, Arg-170, and Arg-177 each contribute to the ATP site. Asp-246 serves as the catalytic Proton acceptor. Mg(2+) contacts are provided by Asn-247 and Asp-256. Residue Asp-256 coordinates ATP.

It belongs to the SELO family. Mg(2+) is required as a cofactor. Requires Mn(2+) as cofactor.

It carries out the reaction L-seryl-[protein] + ATP = 3-O-(5'-adenylyl)-L-seryl-[protein] + diphosphate. The catalysed reaction is L-threonyl-[protein] + ATP = 3-O-(5'-adenylyl)-L-threonyl-[protein] + diphosphate. The enzyme catalyses L-tyrosyl-[protein] + ATP = O-(5'-adenylyl)-L-tyrosyl-[protein] + diphosphate. It catalyses the reaction L-histidyl-[protein] + UTP = N(tele)-(5'-uridylyl)-L-histidyl-[protein] + diphosphate. It carries out the reaction L-seryl-[protein] + UTP = O-(5'-uridylyl)-L-seryl-[protein] + diphosphate. The catalysed reaction is L-tyrosyl-[protein] + UTP = O-(5'-uridylyl)-L-tyrosyl-[protein] + diphosphate. Functionally, nucleotidyltransferase involved in the post-translational modification of proteins. It can catalyze the addition of adenosine monophosphate (AMP) or uridine monophosphate (UMP) to a protein, resulting in modifications known as AMPylation and UMPylation. The sequence is that of Protein nucleotidyltransferase YdiU from Escherichia coli (strain ATCC 8739 / DSM 1576 / NBRC 3972 / NCIMB 8545 / WDCM 00012 / Crooks).